Here is a 365-residue protein sequence, read N- to C-terminus: Peptide chain release factor 2 (365 aa).

Q252 is modified (N5-methylglutamine).

The protein belongs to the prokaryotic/mitochondrial release factor family. In terms of processing, methylated by PrmC. Methylation increases the termination efficiency of RF2.

The protein localises to the cytoplasm. Its function is as follows. Peptide chain release factor 2 directs the termination of translation in response to the peptide chain termination codons UGA and UAA. In Pectobacterium atrosepticum (strain SCRI 1043 / ATCC BAA-672) (Erwinia carotovora subsp. atroseptica), this protein is Peptide chain release factor 2.